A 284-amino-acid chain; its full sequence is Putative ABC transporter ATP-binding protein PH1815 (284 aa).

Residues 4 to 244 (IEVEDVSFRY…VEFLRTIGVK (241 aa)) form the ABC transporter domain. 38–45 (GPSGSGKS) contributes to the ATP binding site.

It belongs to the ABC transporter superfamily.

It is found in the cell membrane. Its function is as follows. Probably part of an ABC transporter complex. Responsible for energy coupling to the transport system. This chain is Putative ABC transporter ATP-binding protein PH1815, found in Pyrococcus horikoshii (strain ATCC 700860 / DSM 12428 / JCM 9974 / NBRC 100139 / OT-3).